The following is a 219-amino-acid chain: Thiopurine S-methyltransferase (219 aa).

Residues tryptophan 10, leucine 45, glutamate 66, and arginine 123 each coordinate S-adenosyl-L-methionine.

Belongs to the class I-like SAM-binding methyltransferase superfamily. TPMT family.

It localises to the cytoplasm. It catalyses the reaction S-adenosyl-L-methionine + a thiopurine = S-adenosyl-L-homocysteine + a thiopurine S-methylether.. The sequence is that of Thiopurine S-methyltransferase from Bordetella pertussis (strain Tohama I / ATCC BAA-589 / NCTC 13251).